The chain runs to 373 residues: 3 beta-hydroxysteroid dehydrogenase/Delta 5--&gt;4-isomerase type 1 (373 aa).

Residues 10-15 (GAGGFL), Tyr-155, and Lys-159 contribute to the NADP(+) site. Lys-159 serves as the catalytic Proton donor. A helical transmembrane segment spans residues 288–308 (LALMYWIGFLLEVVSFLLSPV).

It belongs to the 3-beta-HSD family. In terms of tissue distribution, adrenal glands, testes and ovaries.

It is found in the endoplasmic reticulum membrane. The protein localises to the mitochondrion membrane. It catalyses the reaction a 3beta-hydroxy-Delta(5)-steroid + NAD(+) = a 3-oxo-Delta(5)-steroid + NADH + H(+). The enzyme catalyses pregnenolone + NAD(+) = pregn-5-ene-3,20-dione + NADH + H(+). It carries out the reaction 3beta-hydroxyandrost-5-en-17-one + NAD(+) = androst-5-ene-3,17-dione + NADH + H(+). The catalysed reaction is androst-5-en-3beta,17beta-diol + NAD(+) = 17beta-hydroxy-androst-5-en-3-one + NADH + H(+). It catalyses the reaction a 3beta-hydroxysteroid + NADP(+) = a 3-oxosteroid + NADPH + H(+). The enzyme catalyses 5alpha-androstane-3beta,17beta-diol + NADP(+) = 17beta-hydroxy-5alpha-androstan-3-one + NADPH + H(+). It carries out the reaction 3beta-hydroxy-5alpha-androstan-17-one + NADP(+) = 5alpha-androstan-3,17-dione + NADPH + H(+). The catalysed reaction is a 3-oxo-Delta(5)-steroid = a 3-oxo-Delta(4)-steroid. It catalyses the reaction pregn-5-ene-3,20-dione = progesterone. The enzyme catalyses androst-5-ene-3,17-dione = androst-4-ene-3,17-dione. It carries out the reaction 17beta-hydroxy-androst-5-en-3-one = testosterone. The catalysed reaction is 5alpha-androstane-3beta,17beta-diol + NAD(+) = 17beta-hydroxy-5alpha-androstan-3-one + NADH + H(+). It participates in steroid hormone biosynthesis. Its pathway is steroid metabolism. Its function is as follows. A bifunctional enzyme responsible for the oxidation and isomerization of 3beta-hydroxy-Delta(5)-steroid precursors to 3-oxo-Delta(4)-steroids, an essential step in steroid hormone biosynthesis. Specifically catalyzes the conversion of pregnenolone to progesterone, 17alpha-hydroxypregnenolone to 17alpha-hydroxyprogesterone, dehydroepiandrosterone (DHEA) to 4-androstenedione and androstenediol to testosterone. Additionally, catalyzes the interconversion between 3beta-hydroxy and 3-oxo-5alpha-androstane steroids controlling the bioavalability of the active forms. Specifically converts dihydrotestosterone to its inactive form 5alpha-androstanediol, that does not bind androgen receptor/AR. Also converts androstanedione, a precursor of testosterone and estrone, to epiandrosterone. Expected to use NAD(+) as preferred electron donor for the 3beta-hydroxy-steroid dehydrogenase activity and NADPH for the 3-ketosteroid reductase activity. The sequence is that of 3 beta-hydroxysteroid dehydrogenase/Delta 5--&gt;4-isomerase type 1 (HSD3B1) from Macaca mulatta (Rhesus macaque).